We begin with the raw amino-acid sequence, 346 residues long: Phosphoribosylformylglycinamidine cyclo-ligase (346 aa).

It belongs to the AIR synthase family.

It localises to the cytoplasm. It carries out the reaction 2-formamido-N(1)-(5-O-phospho-beta-D-ribosyl)acetamidine + ATP = 5-amino-1-(5-phospho-beta-D-ribosyl)imidazole + ADP + phosphate + H(+). It functions in the pathway purine metabolism; IMP biosynthesis via de novo pathway; 5-amino-1-(5-phospho-D-ribosyl)imidazole from N(2)-formyl-N(1)-(5-phospho-D-ribosyl)glycinamide: step 2/2. The polypeptide is Phosphoribosylformylglycinamidine cyclo-ligase (Proteus mirabilis (strain HI4320)).